Consider the following 330-residue polypeptide: Succinylglutamate desuccinylase (330 aa).

Zn(2+) contacts are provided by His-53, Glu-56, and His-147. Glu-210 is a catalytic residue.

The protein belongs to the AspA/AstE family. Succinylglutamate desuccinylase subfamily. Zn(2+) is required as a cofactor.

It catalyses the reaction N-succinyl-L-glutamate + H2O = L-glutamate + succinate. It functions in the pathway amino-acid degradation; L-arginine degradation via AST pathway; L-glutamate and succinate from L-arginine: step 5/5. Functionally, transforms N(2)-succinylglutamate into succinate and glutamate. This Yersinia pseudotuberculosis serotype O:1b (strain IP 31758) protein is Succinylglutamate desuccinylase.